Reading from the N-terminus, the 287-residue chain is 4,4'-diapophytoene synthase (287 aa).

(2E,6E)-farnesyl diphosphate contacts are provided by residues 18 to 21 (HSKS), Tyr41, and Arg45. The Mg(2+) site is built by Asp48 and Asp52. Gln165 contributes to the (2E,6E)-farnesyl diphosphate binding site. Asn168 is a Mg(2+) binding site. Residue Arg171 coordinates (2E,6E)-farnesyl diphosphate. Asp172 provides a ligand contact to Mg(2+). Tyr248 contacts (2E,6E)-farnesyl diphosphate.

It belongs to the phytoene/squalene synthase family. CrtM subfamily. It depends on Mg(2+) as a cofactor.

The catalysed reaction is 2 (2E,6E)-farnesyl diphosphate = 15-cis-4,4'-diapophytoene + 2 diphosphate. Its pathway is carotenoid biosynthesis; staphyloxanthin biosynthesis; staphyloxanthin from farnesyl diphosphate: step 1/5. Functionally, involved in the biosynthesis of the yellow-orange carotenoid staphyloxanthin, which plays a role in the virulence via its protective function against oxidative stress. Catalyzes the head-to-head condensation of two molecules of farnesyl diphosphate (FPP) into the colorless C(30) carotenoid 4,4'-diapophytoene (dehydrosqualene). This chain is 4,4'-diapophytoene synthase, found in Staphylococcus aureus (strain NCTC 8325 / PS 47).